A 70-amino-acid polypeptide reads, in one-letter code: Exodeoxyribonuclease 7 small subunit (70 aa).

It belongs to the XseB family. As to quaternary structure, heterooligomer composed of large and small subunits.

It localises to the cytoplasm. The enzyme catalyses Exonucleolytic cleavage in either 5'- to 3'- or 3'- to 5'-direction to yield nucleoside 5'-phosphates.. In terms of biological role, bidirectionally degrades single-stranded DNA into large acid-insoluble oligonucleotides, which are then degraded further into small acid-soluble oligonucleotides. The protein is Exodeoxyribonuclease 7 small subunit of Streptococcus sanguinis (strain SK36).